The primary structure comprises 295 residues: Taste receptor type 2 member 120 (295 aa).

Topologically, residues 1 to 5 (MDLTE) are extracellular. The helical transmembrane segment at 6–26 (WIVTIIMMIEFLLGNCANFFI) threads the bilayer. At 27-45 (MVVNAIDCMKRRKISSADR) the chain is on the cytoplasmic side. Residues 46–66 (IITALAISRIGLLWAMLMNWH) form a helical membrane-spanning segment. At 67-83 (SRVYTTDTYSFQVTAFS) the chain is on the extracellular side. The helical transmembrane segment at 84–104 (GIIWAITNHFTTWLGTILSMF) threads the bilayer. Over 105–125 (YLFKIANFSNCLFLHLKRKLD) the chain is Cytoplasmic. A helical membrane pass occupies residues 126–146 (SVLLVIFLVSSLLVFAYLGVV). The Extracellular segment spans residues 147–177 (NIKKIAWLSVHEGNVTVKSKLMNIASIRDTL). Asn-160 is a glycosylation site (N-linked (GlcNAc...) asparagine). The chain crosses the membrane as a helical span at residues 178–198 (LFSLINIAPFGISLTCVLLLI). Residues 199–230 (YSLGKHLKNMKFYGKGCQDQSTMVHIRALQTV) are Cytoplasmic-facing. Residues 231-251 (VSFLLLYATYSSCVIISGWSI) form a helical membrane-spanning segment. Topologically, residues 252–255 (QNVP) are extracellular. The chain crosses the membrane as a helical span at residues 256-276 (IFLFCVTIGAFYPAGHSCILI). At 277–295 (WGNQKLKQFLLLFLRQMKC) the chain is on the cytoplasmic side.

It belongs to the G-protein coupled receptor T2R family.

Its subcellular location is the membrane. In terms of biological role, putative taste receptor which may play a role in the perception of bitterness. The protein is Taste receptor type 2 member 120 of Rattus norvegicus (Rat).